The chain runs to 123 residues: Small ribosomal subunit protein uS12 (123 aa).

D89 bears the 3-methylthioaspartic acid mark.

Belongs to the universal ribosomal protein uS12 family. As to quaternary structure, part of the 30S ribosomal subunit. Contacts proteins S8 and S17. May interact with IF1 in the 30S initiation complex.

Functionally, with S4 and S5 plays an important role in translational accuracy. In terms of biological role, interacts with and stabilizes bases of the 16S rRNA that are involved in tRNA selection in the A site and with the mRNA backbone. Located at the interface of the 30S and 50S subunits, it traverses the body of the 30S subunit contacting proteins on the other side and probably holding the rRNA structure together. The combined cluster of proteins S8, S12 and S17 appears to hold together the shoulder and platform of the 30S subunit. This Anaeromyxobacter sp. (strain Fw109-5) protein is Small ribosomal subunit protein uS12.